We begin with the raw amino-acid sequence, 1595 residues long: DNA-directed RNA polymerase subunit beta'' (1595 aa).

Zn(2+) contacts are provided by C216, C286, C294, and C297.

Belongs to the RNA polymerase beta' chain family. RpoC2 subfamily. As to quaternary structure, in plastids the minimal PEP RNA polymerase catalytic core is composed of four subunits: alpha, beta, beta', and beta''. When a (nuclear-encoded) sigma factor is associated with the core the holoenzyme is formed, which can initiate transcription. Zn(2+) serves as cofactor.

The protein localises to the plastid. The protein resides in the chloroplast. It carries out the reaction RNA(n) + a ribonucleoside 5'-triphosphate = RNA(n+1) + diphosphate. Functionally, DNA-dependent RNA polymerase catalyzes the transcription of DNA into RNA using the four ribonucleoside triphosphates as substrates. In Bigelowiella natans (Pedinomonas minutissima), this protein is DNA-directed RNA polymerase subunit beta''.